The chain runs to 472 residues: Siroheme synthase (472 aa).

Positions 1-207 are precorrin-2 dehydrogenase /sirohydrochlorin ferrochelatase; it reads MNFLPIFLDI…GKDQAAKAWL (207 aa). NAD(+)-binding positions include 22-23 and 43-44; these read EV and PR. Position 132 is a phosphoserine (S132). The segment at 221–472 is uroporphyrinogen-III C-methyltransferase; the sequence is GEVYLVGAGP…QPEGNLPGAE (252 aa). Residue P230 participates in S-adenosyl-L-methionine binding. D253 acts as the Proton acceptor in catalysis. Catalysis depends on K275, which acts as the Proton donor. Residues 306-308, I311, 336-337, M388, and G417 contribute to the S-adenosyl-L-methionine site; these read GGD and TA.

It in the N-terminal section; belongs to the precorrin-2 dehydrogenase / sirohydrochlorin ferrochelatase family. In the C-terminal section; belongs to the precorrin methyltransferase family.

It catalyses the reaction uroporphyrinogen III + 2 S-adenosyl-L-methionine = precorrin-2 + 2 S-adenosyl-L-homocysteine + H(+). It carries out the reaction precorrin-2 + NAD(+) = sirohydrochlorin + NADH + 2 H(+). The enzyme catalyses siroheme + 2 H(+) = sirohydrochlorin + Fe(2+). It functions in the pathway cofactor biosynthesis; adenosylcobalamin biosynthesis; precorrin-2 from uroporphyrinogen III: step 1/1. The protein operates within cofactor biosynthesis; adenosylcobalamin biosynthesis; sirohydrochlorin from precorrin-2: step 1/1. Its pathway is porphyrin-containing compound metabolism; siroheme biosynthesis; precorrin-2 from uroporphyrinogen III: step 1/1. It participates in porphyrin-containing compound metabolism; siroheme biosynthesis; siroheme from sirohydrochlorin: step 1/1. It functions in the pathway porphyrin-containing compound metabolism; siroheme biosynthesis; sirohydrochlorin from precorrin-2: step 1/1. Its function is as follows. Multifunctional enzyme that catalyzes the SAM-dependent methylations of uroporphyrinogen III at position C-2 and C-7 to form precorrin-2 via precorrin-1. Then it catalyzes the NAD-dependent ring dehydrogenation of precorrin-2 to yield sirohydrochlorin. Finally, it catalyzes the ferrochelation of sirohydrochlorin to yield siroheme. This is Siroheme synthase from Nitrosospira multiformis (strain ATCC 25196 / NCIMB 11849 / C 71).